We begin with the raw amino-acid sequence, 91 residues long: ATP synthase subunit c (91 aa).

Transmembrane regions (helical) follow at residues 4–24 (FTMC…GTGI) and 53–73 (IGLA…LIIL).

This sequence belongs to the ATPase C chain family. As to quaternary structure, F-type ATPases have 2 components, F(1) - the catalytic core - and F(0) - the membrane proton channel. F(1) has five subunits: alpha(3), beta(3), gamma(1), delta(1), epsilon(1). F(0) has three main subunits: a(1), b(2) and c(10-14). The alpha and beta chains form an alternating ring which encloses part of the gamma chain. F(1) is attached to F(0) by a central stalk formed by the gamma and epsilon chains, while a peripheral stalk is formed by the delta and b chains.

The protein resides in the cell inner membrane. F(1)F(0) ATP synthase produces ATP from ADP in the presence of a proton or sodium gradient. F-type ATPases consist of two structural domains, F(1) containing the extramembraneous catalytic core and F(0) containing the membrane proton channel, linked together by a central stalk and a peripheral stalk. During catalysis, ATP synthesis in the catalytic domain of F(1) is coupled via a rotary mechanism of the central stalk subunits to proton translocation. Functionally, key component of the F(0) channel; it plays a direct role in translocation across the membrane. A homomeric c-ring of between 10-14 subunits forms the central stalk rotor element with the F(1) delta and epsilon subunits. This Geotalea uraniireducens (strain Rf4) (Geobacter uraniireducens) protein is ATP synthase subunit c.